Reading from the N-terminus, the 156-residue chain is MRCPSCQFNGTRVVDSRPVDDNKEIRRRRECESCGFRFTTFEKIEETPLVVVKKEGSREEFSREKVLRGLIRACEKRPVALDILEQLVLSIEKDLRRIGNSEVRSEDVGELVMDRLAKIDEVAYVRFASVYRQFKDINVFIEEIKDIIQRQTEQKS.

The segment at 3–34 is a zinc-finger region; the sequence is CPSCQFNGTRVVDSRPVDDNKEIRRRRECESC. The 91-residue stretch at 49-139 folds into the ATP-cone domain; the sequence is LVVVKKEGSR…VYRQFKDINV (91 aa).

This sequence belongs to the NrdR family. Requires Zn(2+) as cofactor.

Functionally, negatively regulates transcription of bacterial ribonucleotide reductase nrd genes and operons by binding to NrdR-boxes. The polypeptide is Transcriptional repressor NrdR (Lysinibacillus sphaericus (strain C3-41)).